We begin with the raw amino-acid sequence, 86 residues long: uncharacterized protein (86 aa).

This is an uncharacterized protein from Archaeoglobus fulgidus (strain ATCC 49558 / DSM 4304 / JCM 9628 / NBRC 100126 / VC-16).